Reading from the N-terminus, the 226-residue chain is 2-amino-5-formylamino-6-ribosylaminopyrimidin-4(3H)-one 5'-monophosphate deformylase (226 aa).

Positions 29, 31, 40, and 108 each coordinate Fe cation.

This sequence belongs to the creatininase superfamily. FAPy deformylase family. As to quaternary structure, homodimer. Requires Fe(2+) as cofactor. The cofactor is Zn(2+).

The enzyme catalyses 2-amino-5-formylamino-6-(5-phospho-D-ribosylamino)pyrimidin-4(3H)-one + H2O = 2,5-diamino-6-(1-D-ribosylamino)pyrimidin-4(3H)-one 5'-phosphate + formate + H(+). Its pathway is cofactor biosynthesis; coenzyme F420 biosynthesis. It functions in the pathway cofactor biosynthesis; riboflavin biosynthesis. Catalyzes the hydrolysis of the formamide of 2-amino-5-formylamino-6-ribosylamino-4(3H)-pyrimidinone 5'-monophosphate (FAPy) to form 2,5-diamino-6-ribosylamino-4(3H)-pyrimidinone 5'-phosphate (APy). The chain is 2-amino-5-formylamino-6-ribosylaminopyrimidin-4(3H)-one 5'-monophosphate deformylase from Methanocaldococcus vulcanius (strain ATCC 700851 / DSM 12094 / M7) (Methanococcus vulcanius).